The following is a 618-amino-acid chain: Pyocin-S1 (618 aa).

This sequence belongs to the colicin/pyosin nuclease family. Purified pyocin S1 makes up a complex of the two (large and small) proteins. The large protein, but not the pyocin complex, shows in vitro DNase activity.

In terms of biological role, causes breakdown of chromosomal DNA as well as complete inhibition of lipid synthesis in sensitive cells. The sequence is that of Pyocin-S1 (pys1) from Pseudomonas aeruginosa.